Reading from the N-terminus, the 395-residue chain is Gastric triacylglycerol lipase (395 aa).

The signal sequence occupies residues M1–G18. A glycan (N-linked (GlcNAc...) asparagine) is linked at N33. Residues L81–W376 form the AB hydrolase-1 domain. Catalysis depends on S171, which acts as the Nucleophile. Cysteines 245 and 254 form a disulfide. N270 carries an N-linked (GlcNAc...) asparagine glycan. Active-site charge relay system residues include D342 and H371.

It belongs to the AB hydrolase superfamily. Lipase family.

It is found in the secreted. It catalyses the reaction a triacylglycerol + H2O = a diacylglycerol + a fatty acid + H(+). It carries out the reaction 1,2,3-tri-(9Z-octadecenoyl)-glycerol + H2O = 1,2-di-(9Z-octadecenoyl)-sn-glycerol + (9Z)-octadecenoate + H(+). The catalysed reaction is 1,2,3-trioctanoylglycerol + H2O = 1,2-dioctanoyl-sn-glycerol + octanoate + H(+). Its function is as follows. Catalyzes the hydrolysis of triacylglycerols to yield free fatty acids, diacylglycerol, monoacylglycerol, and glycerol. Shows a preferential hydrolysis at the sn-3 position of triacylglycerol. This chain is Gastric triacylglycerol lipase (Lipf), found in Mus musculus (Mouse).